A 90-amino-acid polypeptide reads, in one-letter code: Protein LURE 1.2 (90 aa).

Positions Met-1–Ser-19 are cleaved as a signal peptide. Asn-23 carries an N-linked (GlcNAc...) asparagine glycan. Intrachain disulfides connect Cys-58–Cys-75, Cys-61–Cys-82, and Cys-65–Cys-84. The tract at residues Arg-67–Ser-87 is PRK6 binding.

Belongs to the DEFL family. Interacts with MDIS1, MIK1, MIK2 and TDR/PXY, but not with MDIS2. Binds to PRK6 LRRs. As to expression, expressed in the pistil. Detected exclusively in the synergid cells.

It localises to the secreted. Functionally, pollen tube attractants guiding pollen tubes to the ovular micropyle. Attracts specifically pollen tubes from A.thaliana, but not those from A.lyrata. Triggers endocytosis of MDIS1 in the pollen tube tip. This Arabidopsis thaliana (Mouse-ear cress) protein is Protein LURE 1.2.